We begin with the raw amino-acid sequence, 172 residues long: Disulfide bond formation protein B (172 aa).

Topologically, residues 1–13 (MNWLAQLPTQRTP) are cytoplasmic. Residues 14-30 (WLLFSGIVFLLEITALF) traverse the membrane as a helical segment. At 31-48 (FQYKMGLAPCIMCIYQRT) the chain is on the periplasmic side. Residues cysteine 40 and cysteine 43 are joined by a disulfide bond. The chain crosses the membrane as a helical span at residues 49–64 (AVLGLLIAGIIGTSNP). At 65 to 71 (EHRGVRL) the chain is on the cytoplasmic side. A helical transmembrane segment spans residues 72–89 (LAYSVWAVSSVWGFIIAR). Topologically, residues 90–145 (EHIEMQTTTDPFAFSCEFEPNFPAFMPLHEWIPSFFAATGDCGNIDWQFAGLSMPA) are periplasmic. Cysteine 105 and cysteine 131 are joined by a disulfide. A helical membrane pass occupies residues 146–164 (WMEVIFALFAATLFLLVTS). At 165 to 172 (RLMTKRSL) the chain is on the cytoplasmic side.

The protein belongs to the DsbB family.

The protein resides in the cell inner membrane. Its function is as follows. Required for disulfide bond formation in some periplasmic proteins. Acts by oxidizing the DsbA protein. This is Disulfide bond formation protein B from Pseudoalteromonas translucida (strain TAC 125).